The primary structure comprises 398 residues: Basic helix-loop-helix neural transcription factor TAP (398 aa).

Disordered regions lie at residues 35-59 (ETEA…IPQP) and 102-144 (RATN…RSRS). The span at 127-141 (RPKRKYAVGKNRVTR) shows a compositional bias: basic residues. The region spanning 154–206 (FRRMKANDRERNRMHNLNDALEKLRVTLPSLPEETKLTKIEILRFAHNYIFAL) is the bHLH domain. Disordered regions lie at residues 265–333 (AQHQ…QQFS) and 361–398 (QQSS…APQV). Over residues 307 to 333 (HQQQQQPHQPHHLQPNPQQESSPQQFS) the composition is skewed to low complexity. Polar residues predominate over residues 361–370 (QQSSFYSQTP).

Expressed in neuronal and glial precursors during differentiation. In the peripheral nervous system, expression is exclusively in one of the neurons that innervate each larval chemosensory organ. Expressed at a late stage in the development of one type of adult chemosensory organ, the gustatory bristles of the leg, wing and proboscis. Expressed very early in the development of a second type of chemosensory receptors, the olfactory organs of the antenna.

It is found in the nucleus. May play a role in the specification of the sugar-sensitive adult gustatory neuron and affect the response to sugar and salt. Regulated by POXN. This Drosophila melanogaster (Fruit fly) protein is Basic helix-loop-helix neural transcription factor TAP (tap).